The sequence spans 96 residues: Kunitz-type serine protease inhibitor C6 (96 aa).

The signal sequence occupies residues 1–24; the sequence is MSSGGLLLLLGFLTLWAELTPISG. Position 25 is a pyrrolidone carboxylic acid (Gln25). Residues 31–81 form the BPTI/Kunitz inhibitor domain; the sequence is CHLPADSGRCKAHIPRFYYNPASNQCQGFTYGGCGGNANNFETRDQCRHTC. Cystine bridges form between Cys31-Cys81, Cys40-Cys64, and Cys56-Cys77. Positions 85–96 are excised as a propeptide; it reads GNVGPRPRIASN.

The protein belongs to the venom Kunitz-type family. Expressed by the venom gland.

Its subcellular location is the secreted. Functionally, serine protease inhibitor. This chain is Kunitz-type serine protease inhibitor C6, found in Daboia siamensis (Eastern Russel's viper).